The sequence spans 448 residues: Solute carrier family 52, riboflavin transporter, member 3-A (448 aa).

Transmembrane regions (helical) follow at residues 11 to 31 (AFGL…PLIV), 40 to 60 (LPSY…LVTL), and 73 to 93 (LAIY…AVFW). Asn-94 carries an N-linked (GlcNAc...) asparagine glycan. 2 consecutive transmembrane segments (helical) span residues 107–127 (AFFI…VTFL) and 138–158 (ITTY…VALA). Asn-168, Asn-171, Asn-175, and Asn-194 each carry an N-linked (GlcNAc...) asparagine glycan. 6 consecutive transmembrane segments (helical) span residues 198 to 218 (EIFF…FLIL), 280 to 300 (AFIY…LPSV), 315 to 335 (LSAA…MFFP), 339 to 359 (LVFL…NMAM), 376 to 396 (AIIV…KVMV), and 407 to 427 (ALVW…IIMF).

It belongs to the riboflavin transporter family.

It localises to the cell membrane. The catalysed reaction is riboflavin(in) = riboflavin(out). In terms of biological role, plasma membrane transporter mediating the uptake by cells of the water soluble vitamin B2/riboflavin that plays a key role in biochemical oxidation-reduction reactions of the carbohydrate, lipid, and amino acid metabolism. This Danio rerio (Zebrafish) protein is Solute carrier family 52, riboflavin transporter, member 3-A (slc52a3a).